The chain runs to 379 residues: MVTGITTTMSPNVLGTAVVSTQQQQQQQQHKEAPIKSDRRSNKPIMEKRRRARINNCLNELKTLILDATKKDPARHSKLEKADILEKTVKHLQELQRQQAAMQQAADPKIINKFKAGFADCANEVSRFPGLDSTQRRRLLQHLSNCINGVKTELHHQQRQQALAQAQSLHAQVVLPSPPSSPEQEPSVTPVAASGNNNSSSNNTNTTAPYLFGQIQQNANGYFLPNGMQVIPTKLPNGSIALVLPQSLPQQQQQQLLQQHQHHQQQQQLAAAAAAAAAAAAAVAQQHQQSPLLVAMPQRTASTGSASSHSSAGYESAPSSSSSRGSYAPPSPANSAYEPMDVKPSVIQRVPHMHLEQQPLSLVIKKQIKVEEEQPWRPW.

The interval 20–50 (STQQQQQQQQHKEAPIKSDRRSNKPIMEKRR) is disordered. The segment covering 29–47 (QHKEAPIKSDRRSNKPIME) has biased composition (basic and acidic residues). Residues 36-55 (KSDRRSNKPIMEKRRRARIN) are interaction with Topors. The region spanning 38–95 (DRRSNKPIMEKRRRARINNCLNELKTLILDATKKDPARHSKLEKADILEKTVKHLQEL) is the bHLH domain. The Orange domain maps to 114 to 143 (FKAGFADCANEVSRFPGLDSTQRRRLLQHL). Disordered stretches follow at residues 167–208 (QSLH…NTTA) and 298–345 (QRTA…VKPS). Composition is skewed to low complexity over residues 182–207 (PEQE…TNTT) and 301–328 (ASTG…GSYA). Residues 376-379 (WRPW) carry the WRPW motif motif.

As to quaternary structure, transcription repression requires formation of a complex with a corepressor protein (Groucho).

It localises to the nucleus. Pair-rule protein that regulates embryonic segmentation and adult bristle patterning. Transcriptional repressor of genes that require a bHLH protein for their transcription (e.g. ftz). The polypeptide is Protein hairy (Drosophila virilis (Fruit fly)).